Reading from the N-terminus, the 1034-residue chain is Translation initiation factor IF-2 (1034 aa).

Disordered regions lie at residues 118-140 (AAEA…QSVE) and 154-446 (EAEA…NESA). Composition is skewed to low complexity over residues 162–178 (TPPV…AAAP) and 212–228 (PAVK…PAAS). Residues 304–315 (DRAREDARRAAE) are compositionally biased toward basic and acidic residues. In terms of domain architecture, tr-type G spans 535 to 702 (PRAPVVTVMG…NVLLQAEILE (168 aa)). Positions 544 to 551 (GHVDHGKT) are G1. 544–551 (GHVDHGKT) lines the GTP pocket. The G2 stretch occupies residues 569–573 (GITQH). Residues 590 to 593 (DTPG) are G3. Residues 590–594 (DTPGH) and 644–647 (NKID) contribute to the GTP site. The interval 644–647 (NKID) is G4. Residues 680 to 682 (SAK) are G5.

The protein belongs to the TRAFAC class translation factor GTPase superfamily. Classic translation factor GTPase family. IF-2 subfamily.

It is found in the cytoplasm. In terms of biological role, one of the essential components for the initiation of protein synthesis. Protects formylmethionyl-tRNA from spontaneous hydrolysis and promotes its binding to the 30S ribosomal subunits. Also involved in the hydrolysis of GTP during the formation of the 70S ribosomal complex. The chain is Translation initiation factor IF-2 from Bordetella avium (strain 197N).